The following is a 695-amino-acid chain: UvrABC system protein B (695 aa).

The region spanning 25–176 (KSISEGHRFQ…NQRDVLRDLA (152 aa)) is the Helicase ATP-binding domain. 38–45 (GATGTGKT) lines the ATP pocket. Residues 91 to 114 (YYDYYQPEAYVPSTDTYIAKSSSI) carry the Beta-hairpin motif. The region spanning 454–617 (LLGEIYLRLE…ITPKPIVKKN (164 aa)) is the Helicase C-terminal domain. The UVR domain occupies 652–687 (PELIGQLELKMKEAAKNLEFEEAAQLRDRIKKLRQR).

The protein belongs to the UvrB family. Forms a heterotetramer with UvrA during the search for lesions. Interacts with UvrC in an incision complex.

It localises to the cytoplasm. Functionally, the UvrABC repair system catalyzes the recognition and processing of DNA lesions. A damage recognition complex composed of 2 UvrA and 2 UvrB subunits scans DNA for abnormalities. Upon binding of the UvrA(2)B(2) complex to a putative damaged site, the DNA wraps around one UvrB monomer. DNA wrap is dependent on ATP binding by UvrB and probably causes local melting of the DNA helix, facilitating insertion of UvrB beta-hairpin between the DNA strands. Then UvrB probes one DNA strand for the presence of a lesion. If a lesion is found the UvrA subunits dissociate and the UvrB-DNA preincision complex is formed. This complex is subsequently bound by UvrC and the second UvrB is released. If no lesion is found, the DNA wraps around the other UvrB subunit that will check the other stand for damage. In Synechococcus sp. (strain JA-2-3B'a(2-13)) (Cyanobacteria bacterium Yellowstone B-Prime), this protein is UvrABC system protein B.